The primary structure comprises 1194 residues: ATP-dependent RNA helicase DHX30 (1194 aa).

Basic and acidic residues predominate over residues 1–10 (MFSLDSFRKD). Residues 1-27 (MFSLDSFRKDRAQHRQRQCKLPPPRLP) form a disordered region. A Phosphoserine modification is found at serine 6. One can recognise a DRBM domain in the interval 53-121 (PKNLLNSVIG…QAAAAACQLF (69 aa)). Residues 150 to 199 (ADSWWRPEPTMPPTSWRQLNPESIRPGGPGGLSRSLGREEEEDEEEELEE) are disordered. The segment covering 188-199 (EEEEDEEEELEE) has biased composition (acidic residues). Phosphoserine is present on residues serine 226 and serine 380. Positions 444-612 (LNAIEQHPVV…FGGCPVIKVP (169 aa)) constitute a Helicase ATP-binding domain. ATP is bound at residue 457–464 (GDTGCGKT). Positions 559–562 (DEVH) match the DEAH box motif. The 174-residue stretch at 654-827 (LVTDLVLHID…NLVLQAKIHM (174 aa)) folds into the Helicase C-terminal domain.

The protein belongs to the DEAD box helicase family. DEAH subfamily. In terms of assembly, identified in a complex with TFAM and SSBP1. Interacts (via N-terminus) with ZC3HAV1 (via N-terminal domain) in an RNA-independent manner. Found in a complex with GRSF1, DDX28, FASTKD2 and FASTKD5.

It is found in the cytoplasm. It localises to the mitochondrion. Its subcellular location is the mitochondrion matrix. The protein localises to the mitochondrion nucleoid. It carries out the reaction ATP + H2O = ADP + phosphate + H(+). RNA-dependent helicase. Plays an important role in the assembly of the mitochondrial large ribosomal subunit. Required for optimal function of the zinc-finger antiviral protein ZC3HAV1. Associates with mitochondrial DNA. Involved in nervous system development and differentiation through its involvement in the up-regulation of a number of genes which are required for neurogenesis, including GSC, NCAM1, neurogenin, and NEUROD. This Pongo abelii (Sumatran orangutan) protein is ATP-dependent RNA helicase DHX30 (DHX30).